The primary structure comprises 131 residues: Holo-[acyl-carrier-protein] synthase (131 aa).

Residues Asp-8 and Glu-59 each contribute to the Mg(2+) site.

This sequence belongs to the P-Pant transferase superfamily. AcpS family. Requires Mg(2+) as cofactor.

It localises to the cytoplasm. It carries out the reaction apo-[ACP] + CoA = holo-[ACP] + adenosine 3',5'-bisphosphate + H(+). In terms of biological role, transfers the 4'-phosphopantetheine moiety from coenzyme A to a Ser of acyl-carrier-protein. The sequence is that of Holo-[acyl-carrier-protein] synthase from Orientia tsutsugamushi (strain Boryong) (Rickettsia tsutsugamushi).